We begin with the raw amino-acid sequence, 370 residues long: Protein PELPK1 (370 aa).

An N-terminal signal peptide occupies residues 1–34 (MALMKKSLSAALLSSPLLIICLIALLADPFSVGA). A run of 52 repeats spans residues 43–47 (PEIPK), 49–53 (PELPK), 54–58 (FEVPK), 60–64 (PEFPK), 65–69 (PELPK), 71–75 (PEFPK), 76–80 (PELPK), 82–86 (PEIPK), 87–91 (PELPK), 93–97 (PEIPK), 98–102 (PEETK), 104–108 (PDIPK), 109–113 (LELPK), 115–119 (PEIPK), 120–124 (PELPK), 126–130 (PEIPK), 131–135 (PELPK), 137–141 (PEIQK), 142–146 (PELPK), 148–152 (PEIPK), 153–157 (PELPK), 159–163 (PEIPK), 164–168 (PDLPK), 175–179 (PEVPK), 186–190 (PEAPK), 192–196 (PEIPK), 197–201 (PELPK), 203–207 (PEVPK), 214–218 (PEIQK), 219–223 (PELPK), 225–229 (PELPK), 231–235 (PEIQK), 236–240 (PELPK), 242–246 (PEVPK), 247–251 (LEAPK), 253–257 (PEIQK), 258–262 (PELPK), 264–268 (PELPK), 270–274 (PEIQK), 275–279 (PELPK), 281–285 (PEIQK), 286–290 (PELPK), 292–296 (PEVPK), 303–307 (PEVPK), 314–318 (PEIPK), 319–323 (PELPK), 325–329 (PEVPK), 330–334 (PELPK), 336–340 (PEITK), 344–348 (PEIPK), 355–359 (PQLPK), and 361–365 (PEFPK). The tract at residues 43 to 365 (PEIPKLPELP…QLPKLPEFPK (323 aa)) is 52 X 5 AA tandem repeat of P-[DEGQ]-[AEFLIV]-[QPT]-K. Over residues 65–223 (PELPKLPEFP…PEIQKPELPK (159 aa)) the composition is skewed to basic and acidic residues. Residues 65–370 (PELPKLPEFP…PEFPKVPGTP (306 aa)) are disordered. Positions 232 to 262 (EIQKPELPKLPEVPKLEAPKVPEIQKPELPK) are enriched in basic and acidic residues. Composition is skewed to basic and acidic residues over residues 271–296 (EIQKPELPKMPEIQKPELPKVPEVPK) and 306–334 (PKSEAPKFPEIPKPELPKIPEVPKPELPK).

It is found in the secreted. Its subcellular location is the cell wall. Its function is as follows. Positive regulator of germination and plant growth. This Arabidopsis thaliana (Mouse-ear cress) protein is Protein PELPK1.